The chain runs to 366 residues: Endophilin-B1 (366 aa).

Positions 1–30 are membrane-binding amphipathic helix; that stretch reads MNIMDFNMKKLAADAGTFLSRAVQFTEEKL. The required for membrane binding stretch occupies residues 1-37; it reads MNIMDFNMKKLAADAGTFLSRAVQFTEEKLGQAEKTE. The BAR domain maps to 27–261; the sequence is EEKLGQAEKT…LGSFPSTFLS (235 aa). 2 coiled-coil regions span residues 34–54 and 160–185; these read EKTELDAHLENLLSKAECTKQ and KERKLLQNKRLDLDAAKTRLKKAKVA. Residues 306–366 enclose the SH3 domain; it reads SGSRKARVLY…VPITYLELLN (61 aa).

The protein belongs to the endophilin family. As to quaternary structure, homodimer, and heterodimer with SH3GLB2. Binds BAX. Binds DNM1, HTT, AMPH, BIN1 and ARFGAP1.

Its subcellular location is the cytoplasm. It localises to the golgi apparatus membrane. The protein localises to the mitochondrion outer membrane. In terms of biological role, may be required for normal outer mitochondrial membrane dynamics. Required for coatomer-mediated retrograde transport in certain cells. May recruit other proteins to membranes with high curvature. May promote membrane fusion. In Gallus gallus (Chicken), this protein is Endophilin-B1.